We begin with the raw amino-acid sequence, 370 residues long: sn-glycerol-3-phosphate import ATP-binding protein UgpC (370 aa).

An ABC transporter domain is found at 4 to 235 (LRLDGIRKRY…PATRFVASFL (232 aa)). 37-44 (GPSGCGKS) contacts ATP.

It belongs to the ABC transporter superfamily. sn-glycerol-3-phosphate importer (TC 3.A.1.1.3) family. As to quaternary structure, the complex is composed of two ATP-binding proteins (UgpC), two transmembrane proteins (UgpA and UgpE) and a solute-binding protein (UgpB).

It localises to the cell inner membrane. It catalyses the reaction sn-glycerol 3-phosphate(out) + ATP + H2O = sn-glycerol 3-phosphate(in) + ADP + phosphate + H(+). Its function is as follows. Part of the ABC transporter complex UgpBAEC involved in sn-glycerol-3-phosphate (G3P) import. Responsible for energy coupling to the transport system. In Chromohalobacter salexigens (strain ATCC BAA-138 / DSM 3043 / CIP 106854 / NCIMB 13768 / 1H11), this protein is sn-glycerol-3-phosphate import ATP-binding protein UgpC.